We begin with the raw amino-acid sequence, 3416 residues long: Genome polyprotein (3416 aa).

The segment at 1–34 (MAKGAVLKGKGGGPPRRVPKETAKKTRQGPGRLP) is disordered. The Cytoplasmic segment spans residues 1–99 (MAKGAVLKGK…NKRRGKRRST (99 aa)). Positions 97–117 (RSTTGLLTPILLACLATLVFS) are cleaved as a propeptide — ER anchor for the capsid protein C, removed in mature form by serine protease NS3. A helical membrane pass occupies residues 100–120 (TGLLTPILLACLATLVFSATV). The Extracellular segment spans residues 121–243 (RRERTGNMVI…HLTRVEGWVW (123 aa)). Residue Asn-145 is glycosylated (N-linked (GlcNAc...) asparagine; by host). Residues 244 to 261 (KNKFLTAAFCAVVWMVTD) traverse the membrane as a helical segment. Residue Ser-262 is a topological domain, cytoplasmic. A helical membrane pass occupies residues 263–281 (LPTRFIVITVALCLAPTYA). Topologically, residues 282–728 (TRCTHLQNRD…HTAFGAAFNT (447 aa)) are extracellular. 6 cysteine pairs are disulfide-bonded: Cys-284–Cys-311, Cys-341–Cys-397, Cys-341–Cys-402, Cys-355–Cys-386, Cys-373–Cys-397, and Cys-373–Cys-402. The interval 379–392 (DRGWGNHCGLFGKG) is fusion peptide. A glycan (N-linked (GlcNAc...) asparagine; by host) is linked at Asn-435. Disulfide bonds link Cys-467-Cys-571 and Cys-588-Cys-619. A helical membrane pass occupies residues 729–749 (IFGGVGFLPRILLGVALAWLG). The Cytoplasmic segment spans residues 750–756 (LNSRNPT). A helical membrane pass occupies residues 757–777 (LSVGFLITGGLVLTMTLGVGA). Residues 778 to 1134 (DMGCAIDANR…RSMVLADNGA (357 aa)) are Extracellular-facing. Disulfide bonds link Cys-781-Cys-792, Cys-832-Cys-922, Cys-957-Cys-1002, Cys-1059-Cys-1108, Cys-1070-Cys-1092, and Cys-1091-Cys-1095. Asn-862, Asn-985, and Asn-1001 each carry an N-linked (GlcNAc...) asparagine; by host glycan. A helical membrane pass occupies residues 1135–1155 (MLSEGGVPGIVAVFVVLELVI). The Lumenal portion of the chain corresponds to 1156–1164 (RRRPTTGSS). Residues 1165-1185 (VVWCGMVVLGLVVTGLVTIEG) form a helical membrane-spanning segment. The Cytoplasmic portion of the chain corresponds to 1186–1189 (LCRY). The helical transmembrane segment at 1190–1210 (VVAVGILMSMELGPEIVALVL) threads the bilayer. Topologically, residues 1211–1235 (LQAVFDMRTGLLVAFAVKRAYTTRE) are lumenal. A helical transmembrane segment spans residues 1236–1256 (AVATYFLLLVLELGFPEASLS). At 1257–1295 (NIWKWADSLAMGALILQACGQEGRTRVGYLLAAMMTQKD) the chain is on the cytoplasmic side. Residues 1296 to 1316 (MVIIHTGLTIFLSAATAMAVW) form a helical membrane-spanning segment. The Lumenal portion of the chain corresponds to 1317–1361 (SMIKGQRDQKGLSWATPLAGLLGGEGVGLRLLAFRKLAERRNRRS). The chain crosses the membrane as a helical span at residues 1362–1379 (FSEPLTVVGVMLTVASGM). The Cytoplasmic portion of the chain corresponds to 1380–1384 (VRHTS). A helical transmembrane segment spans residues 1385 to 1405 (QEALCALVAGAFLLLMMVLGT). The Lumenal portion of the chain corresponds to 1406–1456 (RKMQLTAEWCGEVEWNPDLVNEGGEVNLKVRQDAMGNLHLTEVEKEERAMA). The interval 1412–1451 (AEWCGEVEWNPDLVNEGGEVNLKVRQDAMGNLHLTEVEKE) is interacts with and activates NS3 protease. Residues 1457–1477 (LWLLAGLVASAFHWAGILIVL) constitute an intramembrane region (helical). Residues 1478-2162 (AVWTLFEMLG…RMAERDAPEA (685 aa)) are Lumenal-facing. Positions 1492–1671 (SELVFSGQET…EAEKSRPEIP (180 aa)) constitute a Peptidase S7 domain. Residues His-1545, Asp-1569, and Ser-1629 each act as charge relay system; for serine protease NS3 activity in the active site. Positions 1677–1833 (TGWMSKGQIT…ESNGAIMSEE (157 aa)) constitute a Helicase ATP-binding domain. Residue 1690 to 1697 (MHPGSGKT) coordinates ATP. A DEAH box motif is present at residues 1781–1784 (DEAH). A Helicase C-terminal domain is found at 1844-2002 (GFDWITEYEG…TLRGPVATFY (159 aa)). Residue Lys-1885 is modified to N6-acetyllysine; by host. The chain crosses the membrane as a helical span at residues 2163–2183 (FLTIVEVAVLGVATLGILWCF). Residues 2184–2191 (VARASVSR) are Cytoplasmic-facing. An intramembrane region (helical) is located at residues 2192 to 2211 (MFLGTVVLFAALFLLWIGGV). Position 2212 (Asp-2212) is a topological domain, lumenal. The helical transmembrane segment at 2213-2233 (YGHMAGIALIFYTLLTVLQPE) threads the bilayer. Over 2234 to 2246 (PGKQRSSDDNRLA) the chain is Cytoplasmic. A helical membrane pass occupies residues 2247–2267 (YFLLGLFSLAGLVTANEMGML). At 2268 to 2301 (DKTKADLAGLVWRGEQRHPAWEEWTNVDIQPARS) the chain is on the lumenal side. Positions 2302 to 2322 (WGTYVLIVSLFTPYMLHQLQT) form an intramembrane region, helical. The Lumenal segment spans residues 2323–2345 (KIQQLVNSSVASGAQAMRDLGGG). Positions 2346–2366 (TPFFGVAGHVIALGVTSLVGA) form an intramembrane region, helical. Over 2367–2368 (TP) the chain is Lumenal. The chain crosses the membrane as a helical span at residues 2369–2389 (MSLGLGVALAAFHLAIVASGL). Residues 2390–2432 (EAELTQRAHRVFFSAMVKNPMVDGDVINPFPDGETKPALYERR) are Cytoplasmic-facing. The chain crosses the membrane as a helical span at residues 2433-2453 (MSLILAIALCMGSVVLNRTAA). Topologically, residues 2454-2476 (SMTEAGAVGLAALGQLVHPETET) are lumenal. Residues 2477-2497 (LWTMPMACGMAGLVRGSFWGL) traverse the membrane as a helical segment. The Cytoplasmic portion of the chain corresponds to 2498–3416 (LPMGHRLWLR…WDLKLESNII (919 aa)). The mRNA cap 0-1 NS5-type MT domain maps to 2514–2778 (GGAEGETLGD…EVDLGTGTRC (265 aa)). Ser-2569 provides a ligand contact to S-adenosyl-L-methionine. A Phosphoserine modification is found at Ser-2569. Catalysis depends on Lys-2574, which acts as the For 2'-O-MTase activity. S-adenosyl-L-methionine is bound by residues Gly-2599, Trp-2600, Thr-2617, Ile-2618, Asp-2644, and Val-2645. Asp-2659 acts as the For 2'-O-MTase activity in catalysis. Ile-2660 lines the S-adenosyl-L-methionine pocket. Residues Lys-2696 and Glu-2732 each act as for 2'-O-MTase activity in the active site. The interval 2732–2736 (EMYFS) is interaction with host SCRIB. Position 2734 (Tyr-2734) interacts with S-adenosyl-L-methionine. Positions 2952, 2956, 2961, and 2964 each coordinate Zn(2+). The RdRp catalytic domain occupies 3042–3191 (GLFYADDTAG…RPIDDRFGKA (150 aa)). Zn(2+) is bound by residues His-3226, Cys-3242, and Cys-3361.

This sequence in the N-terminal section; belongs to the class I-like SAM-binding methyltransferase superfamily. mRNA cap 0-1 NS5-type methyltransferase family. In terms of assembly, homodimer. Interacts (via N-terminus) with host EXOC1 (via C-terminus); this interaction results in EXOC1 degradation through the proteasome degradation pathway. Forms heterodimers with envelope protein E in the endoplasmic reticulum and Golgi. As to quaternary structure, homodimer; in the endoplasmic reticulum and Golgi. Interacts with protein prM. Interacts with non-structural protein 1. In terms of assembly, homodimer; Homohexamer when secreted. Interacts with envelope protein E. NS1 interacts with NS4B. Interacts with host complement protein CFH; this interaction leads to the degradation of C3. Interacts (via N-terminus) with serine protease NS3. As to quaternary structure, forms a heterodimer with serine protease NS3. May form homooligomers. In terms of assembly, forms a heterodimer with NS2B. Interacts with non-structural protein 2A (via N-terminus). Interacts with NS4B. Interacts with unphosphorylated RNA-directed RNA polymerase NS5; this interaction stimulates RNA-directed RNA polymerase NS5 guanylyltransferase activity. Interacts with serine protease NS3. As to quaternary structure, homodimer. Interacts with host STAT2; this interaction inhibits the phosphorylation of the latter, and, when all viral proteins are present (polyprotein), targets STAT2 for degradation. Interacts with serine protease NS3. Post-translationally, specific enzymatic cleavages in vivo yield mature proteins. Cleavages in the lumen of endoplasmic reticulum are performed by host signal peptidase, whereas cleavages in the cytoplasmic side are performed by serine protease NS3. Signal cleavage at the 2K-4B site requires a prior NS3 protease-mediated cleavage at the 4A-2K site. In terms of processing, cleaved in post-Golgi vesicles by a host furin, releasing the mature small envelope protein M, and peptide pr. This cleavage is incomplete as up to 30% of viral particles still carry uncleaved prM. N-glycosylated. Post-translationally, N-glycosylated. The excreted form is glycosylated and this is required for efficient secretion of the protein from infected cells. In terms of processing, acetylated by host KAT5. Acetylation modulates NS3 RNA-binding and unwinding activities and plays an important positive role for viral replication. Phosphorylated on serines residues. This phosphorylation may trigger NS5 nuclear localization.

The protein resides in the virion. It is found in the host nucleus. Its subcellular location is the host cytoplasm. It localises to the host perinuclear region. The protein localises to the secreted. The protein resides in the virion membrane. It is found in the host endoplasmic reticulum membrane. The enzyme catalyses Selective hydrolysis of -Xaa-Xaa-|-Yaa- bonds in which each of the Xaa can be either Arg or Lys and Yaa can be either Ser or Ala.. It carries out the reaction RNA(n) + a ribonucleoside 5'-triphosphate = RNA(n+1) + diphosphate. The catalysed reaction is a ribonucleoside 5'-triphosphate + H2O = a ribonucleoside 5'-diphosphate + phosphate + H(+). It catalyses the reaction ATP + H2O = ADP + phosphate + H(+). The enzyme catalyses a 5'-end (5'-triphosphoguanosine)-ribonucleoside in mRNA + S-adenosyl-L-methionine = a 5'-end (N(7)-methyl 5'-triphosphoguanosine)-ribonucleoside in mRNA + S-adenosyl-L-homocysteine. It carries out the reaction a 5'-end (N(7)-methyl 5'-triphosphoguanosine)-ribonucleoside in mRNA + S-adenosyl-L-methionine = a 5'-end (N(7)-methyl 5'-triphosphoguanosine)-(2'-O-methyl-ribonucleoside) in mRNA + S-adenosyl-L-homocysteine + H(+). Its function is as follows. Plays a role in virus budding by binding to the cell membrane and gathering the viral RNA into a nucleocapsid that forms the core of a mature virus particle. During virus entry, may induce genome penetration into the host cytoplasm after hemifusion induced by the surface proteins. Can migrate to the cell nucleus where it modulates host functions. Inhibits RNA silencing by interfering with host Dicer. In terms of biological role, prevents premature fusion activity of envelope proteins in trans-Golgi by binding to envelope protein E at pH6.0. After virion release in extracellular space, gets dissociated from E dimers. Functionally, acts as a chaperone for envelope protein E during intracellular virion assembly by masking and inactivating envelope protein E fusion peptide. prM is the only viral peptide matured by host furin in the trans-Golgi network probably to avoid catastrophic activation of the viral fusion activity in acidic Golgi compartment prior to virion release. prM-E cleavage is inefficient, and many virions are only partially matured. These uncleaved prM would play a role in immune evasion. Its function is as follows. May play a role in virus budding. Exerts cytotoxic effects by activating a mitochondrial apoptotic pathway through M ectodomain. May display a viroporin activity. Binds to host cell surface receptor and mediates fusion between viral and cellular membranes. Envelope protein is synthesized in the endoplasmic reticulum in the form of heterodimer with protein prM. They play a role in virion budding in the ER, and the newly formed immature particle is covered with 60 spikes composed of heterodimer between precursor prM and envelope protein E. The virion is transported to the Golgi apparatus where the low pH causes dissociation of PrM-E heterodimers and formation of E homodimers. prM-E cleavage is inefficient, and many virions are only partially matured. These uncleaved prM would play a role in immune evasion. In terms of biological role, involved in immune evasion, pathogenesis and viral replication. Once cleaved off the polyprotein, is targeted to three destinations: the viral replication cycle, the plasma membrane and the extracellular compartment. Essential for viral replication. Required for formation of the replication complex and recruitment of other non-structural proteins to the ER-derived membrane structures. Excreted as a hexameric lipoparticle that plays a role against host immune response. Antagonizing the complement function. Binds to the host macrophages and dendritic cells. Inhibits signal transduction originating from Toll-like receptor 3 (TLR3). Functionally, component of the viral RNA replication complex that functions in virion assembly and antagonizes the host immune response. Its function is as follows. Required cofactor for the serine protease function of NS3. May have membrane-destabilizing activity and form viroporins. Displays three enzymatic activities: serine protease, NTPase and RNA helicase. NS3 serine protease, in association with NS2B, performs its autocleavage and cleaves the polyprotein at dibasic sites in the cytoplasm: C-prM, NS2A-NS2B, NS2B-NS3, NS3-NS4A, NS4A-2K and NS4B-NS5. NS3 RNA helicase binds RNA and unwinds dsRNA in the 3' to 5' direction. In terms of biological role, regulates the ATPase activity of the NS3 helicase activity. NS4A allows NS3 helicase to conserve energy during unwinding. Functionally, functions as a signal peptide for NS4B and is required for the interferon antagonism activity of the latter. Its function is as follows. Induces the formation of ER-derived membrane vesicles where the viral replication takes place. Inhibits interferon (IFN)-induced host STAT1 phosphorylation and nuclear translocation, thereby preventing the establishment of cellular antiviral state by blocking the IFN-alpha/beta pathway. Inhibits STAT2 translocation in the nucleus after IFN-alpha treatment. Replicates the viral (+) and (-) RNA genome, and performs the capping of genomes in the cytoplasm. NS5 methylates viral RNA cap at guanine N-7 and ribose 2'-O positions. Besides its role in RNA genome replication, also prevents the establishment of cellular antiviral state by blocking the interferon-alpha/beta (IFN-alpha/beta) signaling pathway. Inhibits host TYK2 and STAT2 phosphorylation, thereby preventing activation of JAK-STAT signaling pathway. The protein is Genome polyprotein of Homo sapiens (Human).